A 347-amino-acid chain; its full sequence is NADH-ubiquinone oxidoreductase chain 2 (347 aa).

The next 11 membrane-spanning stretches (helical) occupy residues 3–23 (PLIFPIIMLTIMLGTLIVMIS), 25–45 (HWLMIWMGFEMNMLAVIPVLM), 59–79 (YFLTQATASMLLMLAIVINLL), 96–116 (IIMTLALTMKLGLAPFHFWVP), 122–142 (VSLTSGLVLLTWQKLAPLSVL), 145–165 (IAPVINSDLILTMSILSIMIG), 178–198 (ILAYSSIAHMGWMTSVLIFNP), 202–222 (LLNLLLYILMTSTTFALFMTV), 240–260 (ITTSILIMMLSLGGLPPLTGF), 276–296 (IILATLMAIAALLSLFFYMRL), and 326–346 (LSPLIILSTLTLPLAPAMMIL).

This sequence belongs to the complex I subunit 2 family. Core subunit of respiratory chain NADH dehydrogenase (Complex I) which is composed of 45 different subunits. Interacts with TMEM242.

The protein resides in the mitochondrion inner membrane. It catalyses the reaction a ubiquinone + NADH + 5 H(+)(in) = a ubiquinol + NAD(+) + 4 H(+)(out). Its function is as follows. Core subunit of the mitochondrial membrane respiratory chain NADH dehydrogenase (Complex I) which catalyzes electron transfer from NADH through the respiratory chain, using ubiquinone as an electron acceptor. Essential for the catalytic activity and assembly of complex I. This is NADH-ubiquinone oxidoreductase chain 2 from Peropteryx macrotis (Lesser dog-like bat).